A 288-amino-acid polypeptide reads, in one-letter code: Oxaloacetate decarboxylase (288 aa).

Ser47 lines the substrate pocket. A Mg(2+)-binding site is contributed by Asp85. Substrate is bound by residues Arg156 and His232.

The protein belongs to the isocitrate lyase/PEP mutase superfamily. Oxaloacetate decarboxylase family. In terms of assembly, homotetramer; dimer of dimers. The cofactor is Mg(2+).

It carries out the reaction oxaloacetate + H(+) = pyruvate + CO2. In terms of biological role, catalyzes the decarboxylation of oxaloacetate into pyruvate. Seems to play a role in maintaining cellular concentrations of bicarbonate and pyruvate. The protein is Oxaloacetate decarboxylase of Rhodopseudomonas palustris (strain BisB18).